We begin with the raw amino-acid sequence, 1604 residues long: Putative surface cell antigen sca2 (1604 aa).

Positions 1-33 are cleaved as a signal peptide; sequence MSLQNSHSKKYVLTFFMSTCLLTSSFLSTSARA. Disordered stretches follow at residues 324 to 354, 554 to 603, and 1183 to 1240; these read TTKP…RTKP, NVNN…SNPN, and QQEN…KSLL. The span at 554–564 shows a compositional bias: low complexity; that stretch reads NVNNNSNKGQN. Positions 568-587 are enriched in pro residues; it reads ILPPTPPLNGSMPPSPPPPL. 2 stretches are compositionally biased toward basic and acidic residues: residues 1193 to 1213 and 1227 to 1240; these read SSTK…KSDS and SKND…KSLL. The Autotransporter domain maps to 1325–1604; sequence EASINRGVWI…QGLIKLKVNL (280 aa).

The protein localises to the cell outer membrane. This Rickettsia felis (strain ATCC VR-1525 / URRWXCal2) (Rickettsia azadi) protein is Putative surface cell antigen sca2 (sca2).